A 506-amino-acid chain; its full sequence is Anaerobic nitric oxide reductase transcription regulator NorR (506 aa).

Residue aspartate 57 is modified to 4-aspartylphosphate. Residues 187–416 (MIGLSPAMTQ…LEHAIHRAVV (230 aa)) form the Sigma-54 factor interaction domain. ATP contacts are provided by residues 215-222 (GETGTGKE) and 278-287 (ADNGTLFLDE). Residues 481–500 (WAASARALETDVANLHRLAK) constitute a DNA-binding region (H-T-H motif).

It participates in nitrogen metabolism; nitric oxide reduction. Functionally, required for the expression of anaerobic nitric oxide (NO) reductase, acts as a transcriptional activator for at least the norVW operon. Activation also requires sigma-54. In Salmonella paratyphi A (strain ATCC 9150 / SARB42), this protein is Anaerobic nitric oxide reductase transcription regulator NorR.